We begin with the raw amino-acid sequence, 91 residues long: Bombyxin B-1 homolog (91 aa).

The first 19 residues, 1-19 (MKVSMFVVIVLCMVAASSA), serve as a signal peptide directing secretion. Intrachain disulfides connect C27–C78, C39–C91, and C77–C82. Residues 49–69 (SGAQYARYGWQSPESREGARG) constitute a propeptide, c peptide like.

This sequence belongs to the insulin family. As to quaternary structure, heterodimer of a B chain and an A chain linked by two disulfide bonds.

It is found in the secreted. Brain peptide responsible for activation of prothoracic glands to produce ecdysone in insects. In Samia cynthia (Ailanthus silkmoth), this protein is Bombyxin B-1 homolog (SBXB1).